A 91-amino-acid polypeptide reads, in one-letter code: Putative regulatory protein Tlet_1629 (91 aa).

This sequence belongs to the RemA family.

In Pseudothermotoga lettingae (strain ATCC BAA-301 / DSM 14385 / NBRC 107922 / TMO) (Thermotoga lettingae), this protein is Putative regulatory protein Tlet_1629.